An 87-amino-acid polypeptide reads, in one-letter code: Large ribosomal subunit protein uL23c (87 aa).

Belongs to the universal ribosomal protein uL23 family. As to quaternary structure, part of the 50S ribosomal subunit.

It localises to the plastid. The protein localises to the chloroplast. In terms of biological role, binds to 23S rRNA. This is Large ribosomal subunit protein uL23c (rpl23) from Ostreococcus tauri.